Consider the following 335-residue polypeptide: Ketol-acid reductoisomerase (NADP(+)) (335 aa).

The 181-residue stretch at 5-185 folds into the KARI N-terminal Rossmann domain; it reads SKIYTDNDAN…GATRAGVIPT (181 aa). Residues 28-31, Ser56, and 86-89 contribute to the NADP(+) site; these read YGSQ and DMVQ. Residue His111 is part of the active site. Residue Gly137 participates in NADP(+) binding. Residues 186–331 enclose the KARI C-terminal knotted domain; it reads TFKEETETDL…NQLRDLVQKG (146 aa). Asp194, Glu198, Glu230, and Glu234 together coordinate Mg(2+). Residue Ser255 participates in substrate binding.

This sequence belongs to the ketol-acid reductoisomerase family. It depends on Mg(2+) as a cofactor.

The catalysed reaction is (2R)-2,3-dihydroxy-3-methylbutanoate + NADP(+) = (2S)-2-acetolactate + NADPH + H(+). The enzyme catalyses (2R,3R)-2,3-dihydroxy-3-methylpentanoate + NADP(+) = (S)-2-ethyl-2-hydroxy-3-oxobutanoate + NADPH + H(+). It functions in the pathway amino-acid biosynthesis; L-isoleucine biosynthesis; L-isoleucine from 2-oxobutanoate: step 2/4. It participates in amino-acid biosynthesis; L-valine biosynthesis; L-valine from pyruvate: step 2/4. Its function is as follows. Involved in the biosynthesis of branched-chain amino acids (BCAA). Catalyzes an alkyl-migration followed by a ketol-acid reduction of (S)-2-acetolactate (S2AL) to yield (R)-2,3-dihydroxy-isovalerate. In the isomerase reaction, S2AL is rearranged via a Mg-dependent methyl migration to produce 3-hydroxy-3-methyl-2-ketobutyrate (HMKB). In the reductase reaction, this 2-ketoacid undergoes a metal-dependent reduction by NADPH to yield (R)-2,3-dihydroxy-isovalerate. This Saccharolobus solfataricus (strain ATCC 35092 / DSM 1617 / JCM 11322 / P2) (Sulfolobus solfataricus) protein is Ketol-acid reductoisomerase (NADP(+)).